Reading from the N-terminus, the 274-residue chain is uncharacterized protein (274 aa).

Residues 99–206 are a coiled coil; it reads NNVISGYVDL…ESEMEIFIQK (108 aa).

This is an uncharacterized protein from Dictyostelium discoideum (Social amoeba).